A 78-amino-acid polypeptide reads, in one-letter code: Large ribosomal subunit protein eL20 (78 aa).

The protein belongs to the eukaryotic ribosomal protein eL20 family. Part of the 50S ribosomal subunit. Binds 23S rRNA.

The sequence is that of Large ribosomal subunit protein eL20 from Pyrobaculum arsenaticum (strain DSM 13514 / JCM 11321 / PZ6).